The primary structure comprises 32 residues: Cytochrome b6-f complex subunit 7 (32 aa).

A helical transmembrane segment spans residues 9–27; sequence AAVFWILIPIGLVGGALLL.

This sequence belongs to the PetM family. As to quaternary structure, the 4 large subunits of the cytochrome b6-f complex are cytochrome b6, subunit IV (17 kDa polypeptide, PetD), cytochrome f and the Rieske protein, while the 4 small subunits are PetG, PetL, PetM and PetN. The complex functions as a dimer.

The protein localises to the cellular thylakoid membrane. Functionally, component of the cytochrome b6-f complex, which mediates electron transfer between photosystem II (PSII) and photosystem I (PSI), cyclic electron flow around PSI, and state transitions. The chain is Cytochrome b6-f complex subunit 7 from Prochlorococcus marinus (strain MIT 9301).